The chain runs to 405 residues: Envelope glycoprotein G (405 aa).

Residues 1 to 19 form the signal peptide; that stretch reads MLAVGATLCLLSFLTGATG. 5 N-linked (GlcNAc...) asparagine; by host glycosylation sites follow: N83, N138, N174, N221, and N288. A helical membrane pass occupies residues 389-405; it reads LKTVYICLALIGLAHVP.

It belongs to the alphaherpesvirinae glycoprotein G family.

It localises to the virion membrane. In terms of biological role, chemokine-binding protein that inhibits neutrophils' chemotaxis. The protein is Envelope glycoprotein G (gG) of Equine herpesvirus 4 (strain 1942) (EHV-4).